A 272-amino-acid polypeptide reads, in one-letter code: tRNA pseudouridine synthase B (272 aa).

Catalysis depends on aspartate 38, which acts as the Nucleophile.

It belongs to the pseudouridine synthase TruB family. Type 1 subfamily.

The catalysed reaction is uridine(55) in tRNA = pseudouridine(55) in tRNA. In terms of biological role, responsible for synthesis of pseudouridine from uracil-55 in the psi GC loop of transfer RNAs. The chain is tRNA pseudouridine synthase B from Campylobacter jejuni (strain RM1221).